A 115-amino-acid chain; its full sequence is Protein translation factor SUI1 homolog (115 aa).

It belongs to the SUI1 family. As to expression, expressed in all tissues examined.

In terms of biological role, probably involved in translation. The protein is Protein translation factor SUI1 homolog (GOS2) of Oryza sativa subsp. indica (Rice).